A 406-amino-acid polypeptide reads, in one-letter code: MAAAVRQDLAQLMNSSGSHKDLAGKYRQILEKAIQLSGAEQLEALKAFVESMVNENVSLVISRQLLTDFCTHLPNLPDSTAKEIYHFTLEKIQPRVISFEEQVASIRQHLASIYEKEEDWRNAAQVLVGIPLETGQKQYNVDYKLETYLKIARLYLEDDDPVQAEAYINRASLLQNESTNEQLQIHYKVCYARVLDYRRKFIEAAQRYNELSYKTIVHESERLEALKHALHCTILASAGQQRSRMLATLFKDERCQQLAAYGILEKMYLDRIIRGNQLQEFAAMLMPHQKATTADGSSILDRAVIEHNLLSASKLYNNITFEELGALLEIPAAKAEKIASQMITEGRMNGFIDQIDGIVHFETREALPTWDKQIQSLCFQVNNLLEKISQTAPEWTAQAMEAQMAQ.

Alanine 2 carries the post-translational modification N-acetylalanine. Lysine 25 carries the post-translational modification N6-acetyllysine. Positions 197-366 (YRRKFIEAAQ…GIVHFETREA (170 aa)) constitute a PCI domain.

The protein belongs to the CSN4 family. In terms of assembly, component of the CSN complex, composed of COPS1/GPS1, COPS2, COPS3, COPS4, COPS5, COPS6, COPS7 (COPS7A or COPS7B), COPS8 and COPS9. In the complex, it probably interacts directly with COPS1, COPS2, COPS3, COPS5, COPS6, COPS7 (COPS7A or COPS7B) and COPS8. Interacts with TOR1A; the interaction is direct and associates TOR1A and SNAPIN with the CSN complex. Interacts with STON2; controls STON2 neddylation levels. Interacts with ERCC6.

Its subcellular location is the cytoplasm. The protein localises to the nucleus. It localises to the cytoplasmic vesicle. It is found in the secretory vesicle. The protein resides in the synaptic vesicle. Its function is as follows. Component of the COP9 signalosome complex (CSN), a complex involved in various cellular and developmental processes. The CSN complex is an essential regulator of the ubiquitin (Ubl) conjugation pathway by mediating the deneddylation of the cullin subunits of SCF-type E3 ligase complexes, leading to decrease the Ubl ligase activity of SCF-type complexes such as SCF, CSA or DDB2. Also involved in the deneddylation of non-cullin subunits such as STON2. The complex is also involved in phosphorylation of p53/TP53, c-jun/JUN, IkappaBalpha/NFKBIA, ITPK1, IRF8/ICSBP and SNAPIN, possibly via its association with CK2 and PKD kinases. CSN-dependent phosphorylation of TP53 and JUN promotes and protects degradation by the Ubl system, respectively. In Bos taurus (Bovine), this protein is COP9 signalosome complex subunit 4 (COPS4).